The primary structure comprises 412 residues: Serine/threonine transporter SstT (412 aa).

Transmembrane regions (helical) follow at residues L16–G36, L44–V64, I82–F102, T115–V135, A141–F161, V179–A199, L217–F237, M298–I318, L330–I350, and F357–V377.

It belongs to the dicarboxylate/amino acid:cation symporter (DAACS) (TC 2.A.23) family.

It is found in the cell inner membrane. The enzyme catalyses L-serine(in) + Na(+)(in) = L-serine(out) + Na(+)(out). The catalysed reaction is L-threonine(in) + Na(+)(in) = L-threonine(out) + Na(+)(out). In terms of biological role, involved in the import of serine and threonine into the cell, with the concomitant import of sodium (symport system). This is Serine/threonine transporter SstT from Stutzerimonas stutzeri (strain A1501) (Pseudomonas stutzeri).